The following is a 404-amino-acid chain: Tryptophan synthase beta chain (404 aa).

Lys98 is modified (N6-(pyridoxal phosphate)lysine).

The protein belongs to the TrpB family. As to quaternary structure, tetramer of two alpha and two beta chains. Pyridoxal 5'-phosphate serves as cofactor.

The enzyme catalyses (1S,2R)-1-C-(indol-3-yl)glycerol 3-phosphate + L-serine = D-glyceraldehyde 3-phosphate + L-tryptophan + H2O. The protein operates within amino-acid biosynthesis; L-tryptophan biosynthesis; L-tryptophan from chorismate: step 5/5. Its function is as follows. The beta subunit is responsible for the synthesis of L-tryptophan from indole and L-serine. This Rhodopseudomonas palustris (strain BisB5) protein is Tryptophan synthase beta chain.